Here is a 435-residue protein sequence, read N- to C-terminus: Arginine biosynthesis bifunctional protein ArgJ, mitochondrial (435 aa).

Positions 167, 193, 204, 291, 430, and 435 each coordinate substrate. Catalysis depends on Thr-204, which acts as the Nucleophile.

This sequence belongs to the ArgJ family. As to quaternary structure, heterodimer of an alpha and a beta chain. In terms of processing, the alpha and beta chains are autoproteolytically processed from a single precursor protein within the mitochondrion.

It localises to the mitochondrion matrix. It catalyses the reaction N(2)-acetyl-L-ornithine + L-glutamate = N-acetyl-L-glutamate + L-ornithine. The enzyme catalyses L-glutamate + acetyl-CoA = N-acetyl-L-glutamate + CoA + H(+). Its pathway is amino-acid biosynthesis; L-arginine biosynthesis; L-ornithine and N-acetyl-L-glutamate from L-glutamate and N(2)-acetyl-L-ornithine (cyclic): step 1/1. The protein operates within amino-acid biosynthesis; L-arginine biosynthesis; N(2)-acetyl-L-ornithine from L-glutamate: step 1/4. In terms of biological role, catalyzes two activities which are involved in the cyclic version of arginine biosynthesis: the synthesis of acetylglutamate from glutamate and acetyl-CoA, and of ornithine by transacetylation between acetylornithine and glutamate. The chain is Arginine biosynthesis bifunctional protein ArgJ, mitochondrial from Heterostelium pallidum (strain ATCC 26659 / Pp 5 / PN500) (Cellular slime mold).